We begin with the raw amino-acid sequence, 72 residues long: Large ribosomal subunit protein eL40 (72 aa).

The protein belongs to the eukaryotic ribosomal protein eL40 family.

This chain is Large ribosomal subunit protein eL40, found in Nicotiana tabacum (Common tobacco).